A 907-amino-acid chain; its full sequence is Interference hedgehog (907 aa).

The N-terminal stretch at 1-23 (MSLTRRFSLTLLLLLPLLTSLLA) is a signal peptide. Residues 24–709 (AIPVLQANLS…SHNETFNMNP (686 aa)) are Extracellular-facing. 4 consecutive Ig-like C2-type domains span residues 42 to 149 (PGVR…ASIS), 152 to 233 (GADT…VRLA), 252 to 340 (PALL…FIEL), and 346 to 433 (PRIL…LQVN). 3 disulfide bridges follow: Cys-65–Cys-127, Cys-173–Cys-221, and Cys-276–Cys-324. N-linked (GlcNAc...) asparagine glycosylation is found at Asn-101, Asn-203, Asn-300, and Asn-355. A disulfide bridge connects residues Cys-367 and Cys-415. The tract at residues 427-474 (GTLLQVNPKQLPDGEGTGMDSGRSSARPTHSRKQKQQTQMVPPSAPNV) is disordered. A compositionally biased stretch (polar residues) spans 462–474 (QQTQMVPPSAPNV). 2 consecutive Fibronectin type-III domains span residues 468 to 578 (PPSA…LQRG) and 586 to 681 (VPEL…TQRP). The N-linked (GlcNAc...) asparagine glycan is linked to Asn-473. Heparin is bound by residues Arg-504, Lys-511, and Lys-513. N-linked (GlcNAc...) asparagine glycans are attached at residues Asn-537 and Asn-548. Arg-552 provides a ligand contact to heparin. Asn-568 is a glycosylation site (N-linked (GlcNAc...) asparagine). Residues 676-688 (GRTQRPRASSTPQ) show a composition bias toward polar residues. The tract at residues 676–701 (GRTQRPRASSTPQPVLHAVDTTTPSH) is disordered. An N-linked (GlcNAc...) asparagine glycan is attached at Asn-702. The helical transmembrane segment at 710–730 (MLTGTIGGGALLVLLVISACL) threads the bilayer. The Cytoplasmic portion of the chain corresponds to 731-907 (CLCRRRSSRG…SSGSLNSVGV (177 aa)). Disordered stretches follow at residues 780–805 (AQQQ…QDND) and 829–881 (MSSS…NKPG). Composition is skewed to low complexity over residues 781 to 794 (QQQQ…LQQQ) and 853 to 863 (NNNNLNQPGDG). Polar residues predominate over residues 865-878 (LANSADSPRLQASN).

Belongs to the immunoglobulin superfamily. IHOG family. As to quaternary structure, homodimer. Heterotetramer; 2 iHog chains bind 2 hh chains when facilitated by heparin, heparin is required to promote high-affinity interactions between hh and iHog.

It localises to the membrane. Functionally, mediates response to the active Hedgehog (Hh) protein signal in embryos, functioning upstream or at the level of patched (ptc). This is Interference hedgehog from Drosophila virilis (Fruit fly).